The following is a 334-amino-acid chain: Leucine-rich repeat-containing protein 26 (334 aa).

The signal sequence occupies residues 1–30 (MRGSFFSRLPPQLSLLLLLLLLLSWRRVWT). Residues 31–265 (QEHIGTDPSK…QCTQSLAARD (235 aa)) are Extracellular-facing. One can recognise an LRRNT domain in the interval 38–75 (PSKSPVAPVCPEACSCSPGGKANCSALALPAVPAGLSW). 2 disulfides stabilise this stretch: C47–C53 and C51–C61. 5 LRR repeats span residues 76–97 (QVRSLLLDRNRVSTLPPGAFAD), 100–121 (ALLYLVLRENRLRSVHARAFWG), 124–145 (VLQRLDLSSNQLETLSPGTFTP), 148–169 (ALSFLSLAGNRLALLEPSILGP), and 172–194 (LLRVLSLQDNSLSALEAGLLNSL). The LRRCT domain maps to 205-259 (NPWACSCALRPLCTWLRKHPRPTSETETLLCVSPKLQTLNLLTDFPDNAFKQCTQ). Intrachain disulfides connect C209–C235 and C211–C257. The helical transmembrane segment at 266-286 (LAVVYALGPASFLASLAICLA) threads the bilayer. Residues 287–334 (LGSVLTACGARRRRRRTTVRHLIRRQPDPEGPASLEDVGSPTTTAIQA) lie on the Cytoplasmic side of the membrane. Positions 312 to 334 (QPDPEGPASLEDVGSPTTTAIQA) are disordered.

In terms of assembly, interacts with KCNMA1.

It is found in the cell membrane. It localises to the cytoplasm. The protein localises to the cytoskeleton. Auxiliary protein of the large-conductance, voltage and calcium-activated potassium channel (BK alpha). Required for the conversion of BK alpha channels from a high-voltage to a low-voltage activated channel type in non-excitable cells. These are characterized by negative membrane voltages and constant low levels of calcium. This is Leucine-rich repeat-containing protein 26 (Lrrc26) from Rattus norvegicus (Rat).